Consider the following 272-residue polypeptide: Shikimate dehydrogenase (NADP(+)) (272 aa).

Shikimate is bound by residues 14-16 (SKS) and Thr-61. Lys-65 acts as the Proton acceptor in catalysis. Glu-77 lines the NADP(+) pocket. The shikimate site is built by Asn-86 and Asp-102. Residues 126 to 130 (GAGGA), 149 to 154 (NRTVSR), and Met-213 each bind NADP(+). Residue Tyr-215 coordinates shikimate. Position 237 (Gly-237) interacts with NADP(+).

Belongs to the shikimate dehydrogenase family. As to quaternary structure, homodimer.

It carries out the reaction shikimate + NADP(+) = 3-dehydroshikimate + NADPH + H(+). It participates in metabolic intermediate biosynthesis; chorismate biosynthesis; chorismate from D-erythrose 4-phosphate and phosphoenolpyruvate: step 4/7. Functionally, involved in the biosynthesis of the chorismate, which leads to the biosynthesis of aromatic amino acids. Catalyzes the reversible NADPH linked reduction of 3-dehydroshikimate (DHSA) to yield shikimate (SA). The chain is Shikimate dehydrogenase (NADP(+)) from Shigella flexneri serotype 5b (strain 8401).